A 169-amino-acid polypeptide reads, in one-letter code: Mediator of RNA polymerase II transcription subunit 28 (169 aa).

The disordered stretch occupies residues 1–35 (MFSAQQPGPPPPNQPGAPAGLMSTPPGAKNPSSTL). A coiled-coil region spans residues 99–137 (EQVIKEDVSELRNELQRKEALIQKHLTKLRSWQQVLEEI).

This sequence belongs to the Mediator complex subunit 28 family. Component of the Mediator complex.

The protein localises to the nucleus. Component of the Mediator complex, a coactivator involved in the regulated transcription of nearly all RNA polymerase II-dependent genes. Mediator functions as a bridge to convey information from gene-specific regulatory proteins to the basal RNA polymerase II transcription machinery. Mediator is recruited to promoters by direct interactions with regulatory proteins and serves as a scaffold for the assembly of a functional preinitiation complex with RNA polymerase II and the general transcription factors. The chain is Mediator of RNA polymerase II transcription subunit 28 (med28) from Xenopus tropicalis (Western clawed frog).